We begin with the raw amino-acid sequence, 168 residues long: Large ribosomal subunit protein uL11 (168 aa).

It belongs to the universal ribosomal protein uL11 family. As to quaternary structure, part of the ribosomal stalk of the 50S ribosomal subunit. Interacts with L10 and the large rRNA to form the base of the stalk. L10 forms an elongated spine to which L12 dimers bind in a sequential fashion forming a multimeric L10(L12)X complex.

Forms part of the ribosomal stalk which helps the ribosome interact with GTP-bound translation factors. The protein is Large ribosomal subunit protein uL11 of Metallosphaera sedula (strain ATCC 51363 / DSM 5348 / JCM 9185 / NBRC 15509 / TH2).